We begin with the raw amino-acid sequence, 524 residues long: MSPVEVSNVFDTILVLDFGSQYSHLITRRLREFNVYAEMLPCTQKIADLHWKPKGVILSGGPYSVYEKDAPHVDKAIFDLGVPILGICYGLQEIAWINNTEVGRGEKREYGPATLRVEDKSCPLFANVDHSTVWMSHHDKVHNLPAGFKITATSENSPFCGIANEDKQIYGIQFHPEVTHSTQGKTLLRNFAVDICKASQSWNMENFIDTEINRIRELVGPDAEVIGAVSGGVDSTVAAKLMDRAIGDRFHAIMVDNGVLRLNEAATVKKTLGEGLGINLTVVDASDEFLDKLKGVTDPEKKRKIIGNTFIHVFEREAAKIQPKNGKEIEFLLQGTLYPDVIESISFKGPSQTIKTHHNVGGLLENMKLKLIEPLRELFKDEVRELGELLGISHELVWRHPFPGPGIAIRVLGEVTREQVAIARKADYIYIEEIRKAGLYNNISQAFACLLPVKSVGVMGDQRTYEQVIALRAIETTDFMTADWYPFEHSFLKKVASRIVNEVDGVARVTYDITSKPPATVEWE.

One can recognise a Glutamine amidotransferase type-1 domain in the interval 12–201 (TILVLDFGSQ…AVDICKASQS (190 aa)). Cys88 (nucleophile) is an active-site residue. Active-site residues include His175 and Glu177. Positions 202–399 (WNMENFIDTE…LGISHELVWR (198 aa)) constitute a GMPS ATP-PPase domain. 230-236 (SGGVDST) contributes to the ATP binding site. XMP contacts are provided by Arg303, Asp461, Lys516, and Glu522.

In terms of assembly, homodimer. Mg(2+) serves as cofactor.

The protein localises to the cytoplasm. It is found in the cytosol. It catalyses the reaction XMP + L-glutamine + ATP + H2O = GMP + L-glutamate + AMP + diphosphate + 2 H(+). It functions in the pathway purine metabolism; GMP biosynthesis; GMP from XMP (L-Gln route): step 1/1. Functionally, catalyzes the conversion of xanthine monophosphate (XMP) to GMP in the presence of glutamine and ATP through an adenyl-XMP intermediate. This Kluyveromyces lactis (strain ATCC 8585 / CBS 2359 / DSM 70799 / NBRC 1267 / NRRL Y-1140 / WM37) (Yeast) protein is GMP synthase [glutamine-hydrolyzing] (GUA1).